We begin with the raw amino-acid sequence, 139 residues long: D-ribose pyranase (139 aa).

His-20 functions as the Proton donor in the catalytic mechanism. Substrate-binding positions include Asp-28, His-106, and 128–130 (YAN).

Belongs to the RbsD / FucU family. RbsD subfamily. As to quaternary structure, homodecamer.

It localises to the cytoplasm. The catalysed reaction is beta-D-ribopyranose = beta-D-ribofuranose. The protein operates within carbohydrate metabolism; D-ribose degradation; D-ribose 5-phosphate from beta-D-ribopyranose: step 1/2. Catalyzes the interconversion of beta-pyran and beta-furan forms of D-ribose. This is D-ribose pyranase from Serratia proteamaculans (strain 568).